Here is a 381-residue protein sequence, read N- to C-terminus: Putrescine N-methyltransferase 3 (381 aa).

Residues 21-81 (MNGYQNGTSK…TISHDNGNEL (61 aa)) are disordered. Composition is skewed to polar residues over residues 23–39 (GYQNGTSKHQNGHQNGT) and 46–81 (HQNGISEHQNGHQNGTSEHQNGHQNGTISHDNGNEL). The PABS domain occupies 92-329 (PGWFSEFSAL…GVIGYMLCST (238 aa)). S-adenosyl-L-methionine-binding positions include Gln-123, Glu-198, and 229–230 (DG). Asp-248 serves as the catalytic Proton acceptor. Tyr-317 contributes to the S-adenosyl-L-methionine binding site.

It belongs to the class I-like SAM-binding methyltransferase superfamily. Putrescine methyltransferase family. Predominantly expressed in roots.

It carries out the reaction putrescine + S-adenosyl-L-methionine = N-methylputrescine + S-adenosyl-L-homocysteine + H(+). Its pathway is alkaloid biosynthesis; nicotine biosynthesis. Functionally, involved in the biosynthesis of pyridine alkaloid natural products, leading mainly to the production of anabasine, anatabine, nicotine and nornicotine, effective deterrents against herbivores with antiparasitic and pesticide properties (neurotoxins); nornicotine serves as the precursor in the synthesis of the carcinogen compound N'-nitrosonornicotine (NNN). Methyltransferase that mediates the conversion of putrescine to N-methylputrescine. Promotes leaves ripening. This is Putrescine N-methyltransferase 3 from Nicotiana tabacum (Common tobacco).